The primary structure comprises 239 residues: RNA polymerase sigma-E factor (239 aa).

Positions 1–29 (MKKLKLRLTHLWYKLLMKLGLKSDEVYYI) are cleaved as a propeptide — removed by SpoIIGA. The Polymerase core binding motif lies at 86–99 (DLISIGTIGLIKAV). Positions 206–225 (QKDVADMMGISQSYISRLEK) form a DNA-binding region, H-T-H motif.

It belongs to the sigma-70 factor family. Proteolytically cleaved in the N-terminus by SpoIIGA to yield the active peptide.

Sigma factors are initiation factors that promote the attachment of RNA polymerase to specific initiation sites and are then released. This sigma factor is responsible for the expression of sporulation specific genes. The sequence is that of RNA polymerase sigma-E factor (sigE) from Bacillus subtilis (strain 168).